Consider the following 365-residue polypeptide: tRNA 2-selenouridine synthase (365 aa).

The Rhodanese domain maps to 15-138; the sequence is LVNDHPIMDA…MRQFLIETID (124 aa). Residue Cys-98 is the S-selanylcysteine intermediate of the active site.

This sequence belongs to the SelU family. In terms of assembly, monomer.

It carries out the reaction 5-methylaminomethyl-2-thiouridine(34) in tRNA + selenophosphate + (2E)-geranyl diphosphate + H2O + H(+) = 5-methylaminomethyl-2-selenouridine(34) in tRNA + (2E)-thiogeraniol + phosphate + diphosphate. It catalyses the reaction 5-methylaminomethyl-2-thiouridine(34) in tRNA + (2E)-geranyl diphosphate = 5-methylaminomethyl-S-(2E)-geranyl-thiouridine(34) in tRNA + diphosphate. The enzyme catalyses 5-methylaminomethyl-S-(2E)-geranyl-thiouridine(34) in tRNA + selenophosphate + H(+) = 5-methylaminomethyl-2-(Se-phospho)selenouridine(34) in tRNA + (2E)-thiogeraniol. The catalysed reaction is 5-methylaminomethyl-2-(Se-phospho)selenouridine(34) in tRNA + H2O = 5-methylaminomethyl-2-selenouridine(34) in tRNA + phosphate. Involved in the post-transcriptional modification of the uridine at the wobble position (U34) of tRNA(Lys), tRNA(Glu) and tRNA(Gln). Catalyzes the conversion of 2-thiouridine (S2U-RNA) to 2-selenouridine (Se2U-RNA). Acts in a two-step process involving geranylation of 2-thiouridine (S2U) to S-geranyl-2-thiouridine (geS2U) and subsequent selenation of the latter derivative to 2-selenouridine (Se2U) in the tRNA chain. The protein is tRNA 2-selenouridine synthase of Shewanella pealeana (strain ATCC 700345 / ANG-SQ1).